The following is a 521-amino-acid chain: Protein NRT1/ PTR FAMILY 4.2 (521 aa).

12 helical membrane passes run Ile-30 to Val-50, Ala-65 to Ile-85, Phe-89 to Leu-109, Ala-133 to Leu-153, Phe-172 to Leu-192, Phe-204 to Phe-224, Phe-297 to Leu-317, Ile-338 to Tyr-358, Ile-381 to Lys-401, Ile-413 to Leu-433, Ile-451 to Val-471, and Leu-498 to Ala-518.

Belongs to the major facilitator superfamily. Proton-dependent oligopeptide transporter (POT/PTR) (TC 2.A.17) family. As to expression, expressed in siliques.

Its subcellular location is the membrane. Involved in abscisic acid transport. The polypeptide is Protein NRT1/ PTR FAMILY 4.2 (NPF4.2) (Arabidopsis thaliana (Mouse-ear cress)).